A 345-amino-acid chain; its full sequence is Protein RecA (345 aa).

68 to 75 (GVESSGKT) contributes to the ATP binding site.

Belongs to the RecA family.

The protein localises to the cytoplasm. In terms of biological role, can catalyze the hydrolysis of ATP in the presence of single-stranded DNA, the ATP-dependent uptake of single-stranded DNA by duplex DNA, and the ATP-dependent hybridization of homologous single-stranded DNAs. It interacts with LexA causing its activation and leading to its autocatalytic cleavage. The polypeptide is Protein RecA (Aquifex aeolicus (strain VF5)).